The primary structure comprises 325 residues: Quinolinate synthase (325 aa).

Positions 41 and 58 each coordinate iminosuccinate. Cysteine 103 provides a ligand contact to [4Fe-4S] cluster. Iminosuccinate is bound by residues 129–131 and serine 146; that span reads YIN. Residue cysteine 189 participates in [4Fe-4S] cluster binding. Iminosuccinate contacts are provided by residues 215-217 and threonine 232; that span reads HPE. Position 282 (cysteine 282) interacts with [4Fe-4S] cluster.

This sequence belongs to the quinolinate synthase family. Type 2 subfamily. It depends on [4Fe-4S] cluster as a cofactor.

The protein localises to the cytoplasm. The enzyme catalyses iminosuccinate + dihydroxyacetone phosphate = quinolinate + phosphate + 2 H2O + H(+). Its pathway is cofactor biosynthesis; NAD(+) biosynthesis; quinolinate from iminoaspartate: step 1/1. Catalyzes the condensation of iminoaspartate with dihydroxyacetone phosphate to form quinolinate. This Rippkaea orientalis (strain PCC 8801 / RF-1) (Cyanothece sp. (strain PCC 8801)) protein is Quinolinate synthase.